The primary structure comprises 29 residues: Cyclotide mra2 (29 aa).

Disulfide bonds link Cys4-Cys19, Cys8-Cys21, and Cys13-Cys26.

Post-translationally, this is a cyclic peptide. Contains 3 disulfide bonds.

Its function is as follows. Probably participates in a plant defense mechanism. The chain is Cyclotide mra2 from Melicytus ramiflorus (Whitey wood).